A 112-amino-acid chain; its full sequence is Flowering-promoting factor 1-like protein 2 (112 aa).

The protein belongs to the FPF1 family. In terms of tissue distribution, expressed in leaves and in some parts of the flowers, mainly in the sepals.

Modulates the competence to flowering of apical meristems. The protein is Flowering-promoting factor 1-like protein 2 (FLP2) of Arabidopsis thaliana (Mouse-ear cress).